The chain runs to 303 residues: Ornithine carbamoyltransferase (303 aa).

Carbamoyl phosphate contacts are provided by residues 52–55 (STRT), Gln79, Arg103, and 130–133 (HPCQ). L-ornithine is bound by residues Asn161, Asp222, and 226–227 (SM). Residues 262–263 (CL) and Arg290 each bind carbamoyl phosphate.

The protein belongs to the aspartate/ornithine carbamoyltransferase superfamily. OTCase family.

Its subcellular location is the cytoplasm. The catalysed reaction is carbamoyl phosphate + L-ornithine = L-citrulline + phosphate + H(+). It functions in the pathway amino-acid biosynthesis; L-arginine biosynthesis; L-arginine from L-ornithine and carbamoyl phosphate: step 1/3. Its function is as follows. Reversibly catalyzes the transfer of the carbamoyl group from carbamoyl phosphate (CP) to the N(epsilon) atom of ornithine (ORN) to produce L-citrulline. The chain is Ornithine carbamoyltransferase from Geobacter sulfurreducens (strain ATCC 51573 / DSM 12127 / PCA).